Reading from the N-terminus, the 169-residue chain is Peptide methionine sulfoxide reductase MsrA (169 aa).

The active site involves C10.

Belongs to the MsrA Met sulfoxide reductase family.

The catalysed reaction is L-methionyl-[protein] + [thioredoxin]-disulfide + H2O = L-methionyl-(S)-S-oxide-[protein] + [thioredoxin]-dithiol. It carries out the reaction [thioredoxin]-disulfide + L-methionine + H2O = L-methionine (S)-S-oxide + [thioredoxin]-dithiol. Functionally, has an important function as a repair enzyme for proteins that have been inactivated by oxidation. Catalyzes the reversible oxidation-reduction of methionine sulfoxide in proteins to methionine. This is Peptide methionine sulfoxide reductase MsrA from Streptococcus pyogenes serotype M12 (strain MGAS2096).